A 387-amino-acid polypeptide reads, in one-letter code: Norsolorinic acid reductase stcV (387 aa).

D69 contributes to the NADP(+) binding site. Y74 (proton donor) is an active-site residue. H148 lines the substrate pocket. NADP(+) is bound by residues 178–179 (SD), Q204, 233–243 (GALGRGQYKSA), and 301–309 (RTVEQLEAN).

Belongs to the aldo/keto reductase family. Aldo/keto reductase 2 subfamily.

The protein operates within mycotoxin biosynthesis; sterigmatocystin biosynthesis. Norsolorinic acid reductase; part of the gene cluster that mediates the biosynthesis of sterigmatocystin (ST), a polyketide-derived furanocoumarin which is part of the most toxic and carcinogenic compounds among the known mycotoxins. The first step in the biosynthesis of sterigmatocystin is the production of hexanoate by the fatty acid synthase (FAS) units stcJ and stcK. The polyketide backbone is assembled by the non-reducing polyketide synthase stcA by condensation of the starter hexanoyl-CoA and 7 malonyl-CoA extender units followed by cyclization and release of norsolorinic acid. Norsolorinic acid is the first stable intermediate in the biosynthesis of sterigmatocystin and is converted into averantin (AVN) by the ketoreductase stcE which reduces the hexanoate ketone to an alcohol. Averantin is then oxidized into 5'-hydroxyaverantin (HAVN) by the cytochrome P450 monooxygenase stcF. 5'-hydroxyaverantin is further converted to 5'-oxyaverantin (OAVN) by the 5'-hydroxyaverantin dehydrogenase stcG. The next step is the conversion of OAVN into averufin (AVF) which is catalyzed by a yet to be identified enzyme. The cytochrome P450 monooxygenase stcB and the flavin-binding monooxygenase stcW are both required for the conversion of averufin to 1-hydroxyversicolorone. The esterase stcI probably catalyzes the formation of versiconal hemiacetal acetate from 1-hydroxyversicolorone. The oxydoreductase stcN then probably catalyzes the biosynthetic step from versiconal to versicolorin B (VERB). The next step is performed by the versicolorin B desaturase stcL to produce versicolorin A (VERA). The ketoreductase stcU and the cytochrome P450 monooxygenase stcS are involved in the conversion of versicolorin A to demethylsterigmatocystin. The Baeyer-Villiger oxidas stcQ and the reductase stcR might be involved in the biosynthetic step from versicolorin A to demethylsterigmatocystin. The final step in the biosynthesis of sterigmatocystin is the methylation of demethylsterigmatocystin catalyzed by the methyltransferase stcP. The sequence is that of Norsolorinic acid reductase stcV from Emericella nidulans (strain FGSC A4 / ATCC 38163 / CBS 112.46 / NRRL 194 / M139) (Aspergillus nidulans).